Reading from the N-terminus, the 652-residue chain is Proline-rich receptor-like protein kinase PERK1 (652 aa).

The interval 1-137 (MSTAPSPGTT…PPSDSSDGLS (137 aa)) is disordered. Residues 1 to 139 (MSTAPSPGTT…SDSSDGLSTG (139 aa)) are Extracellular-facing. Positions 8–19 (GTTPSPSPPSPP) are enriched in pro residues. Residues Asn-21 and Asn-50 are each glycosylated (N-linked (GlcNAc...) asparagine). Positions 26 to 112 (TPPPAASSPP…PSPNQGPPNT (87 aa)) are enriched in pro residues. Over residues 113–137 (PSGSTPRTPSNTKPSPPSDSSDGLS) the composition is skewed to low complexity. Residues 140–160 (VVVGIAIGGVAILVILTLICL) form a helical membrane-spanning segment. Over 161–652 (LCKKKRRRRH…TGQGYSGPSL (492 aa)) the chain is Cytoplasmic. The disordered stretch occupies residues 169 to 251 (RHDDEAAYYV…GGSDYSDLPV (83 aa)). Polar residues predominate over residues 203 to 213 (NASRPSDNHVV). Pro residues predominate over residues 216–236 (LPPPKPPSPPRKPPPPPPPPA). Thr-269 is modified (phosphothreonine). The region spanning 280-559 (FSEANLLGQG…VRALEGNVSL (280 aa)) is the Protein kinase domain. ATP-binding positions include 286–294 (LGQGGFGYV) and Lys-308. Tyr-353 carries the post-translational modification Phosphotyrosine. The Proton acceptor role is filled by Asp-404. Residues Ser-408 and Ser-437 each carry the phosphoserine modification. Thr-438 and Thr-443 each carry phosphothreonine. Tyr-451 carries the phosphotyrosine modification. The segment covering 605–616 (YGTTGEYSNPTS) has biased composition (polar residues). The disordered stretch occupies residues 605 to 652 (YGTTGEYSNPTSDYGLYPSGSSSEGQATREMEMGKIKKTGQGYSGPSL).

It belongs to the protein kinase superfamily. Ser/Thr protein kinase family. Mostly expressed in inflorescence bolt, flower buds and siliques, and, to a lower extent, in roots, seedlings and leaves.

The protein resides in the cell membrane. It carries out the reaction L-seryl-[protein] + ATP = O-phospho-L-seryl-[protein] + ADP + H(+). The enzyme catalyses L-threonyl-[protein] + ATP = O-phospho-L-threonyl-[protein] + ADP + H(+). The chain is Proline-rich receptor-like protein kinase PERK1 (PERK1) from Arabidopsis thaliana (Mouse-ear cress).